The primary structure comprises 330 residues: Glucokinase (330 aa).

14 to 19 provides a ligand contact to ATP; sequence ADIGGT.

It belongs to the bacterial glucokinase family.

Its subcellular location is the cytoplasm. It catalyses the reaction D-glucose + ATP = D-glucose 6-phosphate + ADP + H(+). This Colwellia psychrerythraea (strain 34H / ATCC BAA-681) (Vibrio psychroerythus) protein is Glucokinase.